Reading from the N-terminus, the 57-residue chain is Large ribosomal subunit protein bL32 (57 aa).

Belongs to the bacterial ribosomal protein bL32 family.

In Geobacillus kaustophilus (strain HTA426), this protein is Large ribosomal subunit protein bL32.